A 374-amino-acid chain; its full sequence is tRNA-specific 2-thiouridylase MnmA (374 aa).

Residues 13 to 20 and M39 contribute to the ATP site; that span reads GMSGGVDS. Residues 99–101 form an interaction with target base in tRNA region; the sequence is NPD. The active-site Nucleophile is the C104. Residues C104 and C201 are joined by a disulfide bond. G128 is a binding site for ATP. The tract at residues 151–153 is interaction with tRNA; the sequence is KDQ. C201 (cysteine persulfide intermediate) is an active-site residue. The tract at residues 313 to 314 is interaction with tRNA; sequence RY.

The protein belongs to the MnmA/TRMU family.

Its subcellular location is the cytoplasm. The catalysed reaction is S-sulfanyl-L-cysteinyl-[protein] + uridine(34) in tRNA + AH2 + ATP = 2-thiouridine(34) in tRNA + L-cysteinyl-[protein] + A + AMP + diphosphate + H(+). In terms of biological role, catalyzes the 2-thiolation of uridine at the wobble position (U34) of tRNA, leading to the formation of s(2)U34. The polypeptide is tRNA-specific 2-thiouridylase MnmA (Streptococcus equi subsp. zooepidemicus (strain MGCS10565)).